The primary structure comprises 543 residues: Sodium/glucose cotransporter (543 aa).

The next 14 helical transmembrane spans lie at 10–30, 45–65, 79–99, 129–149, 156–176, 193–213, 246–266, 287–307, 345–365, 401–421, 427–447, 455–475, 483–503, and 523–543; these read FIDIMVFAIYVAIIIGVGLWV, FLAGKSLPWWAVGASLIAANI, SIGLAIASYEWMSAITLIIVG, ILAVFWISLYIFVNLTSVLYL, TILGIPLMYSILGLALFALVY, VFFLVLGGFMTTYMAVSFIGG, LPGIAVLIGGLWVANLYYWGF, IVFAAFLKLIVPFLVVLPGIA, FLPVGVKGVVFAALAAAIVSS, TAAVVALIIACLIAPMLGGIG, IQEYTGLVSPGILAVFLLGLF, GAIIGVVASIPFALFLKFMPL, MLYTLLFTMVVIAFTSLSTSI, and SFNIAAYGIMIVLAVLYTLFW.

The protein resides in the cell membrane. Actively transports glucose into cells by Na(+) cotransport. The sequence is that of Sodium/glucose cotransporter (sglT) from Vibrio parahaemolyticus.